The primary structure comprises 250 residues: Histone H1.1 (250 aa).

Positions 1 to 11 are enriched in polar residues; sequence MSDSAVATSAS. Disordered stretches follow at residues 1 to 52 and 104 to 250; these read MSDS…QQMV and QTKG…ATKK. Residues 44-118 enclose the H15 domain; it reads SHPPTQQMVD…GASGSFKLSA (75 aa). A compositionally biased stretch (basic and acidic residues) spans 122–133; sequence KDAKPKASAVEK. Positions 140–161 are enriched in low complexity; that stretch reads ASAARATKSKSSTSTTKKAAGA. Residues 174–191 are compositionally biased toward basic and acidic residues; the sequence is KNVEKKKADKEKAKDAKK. Over residues 192–234 the composition is skewed to low complexity; that stretch reads TGTIKAKPTTAKAKSSATKPKTPKPKTTSAKPKKVVSATTPKK. Over residues 235–250 the composition is skewed to basic residues; sequence TAVKKPKAKTASATKK.

It belongs to the histone H1/H5 family.

It localises to the nucleus. The protein localises to the chromosome. Histones H1 are necessary for the condensation of nucleosome chains into higher-order structures. This chain is Histone H1.1 (His1.1), found in Drosophila virilis (Fruit fly).